A 182-amino-acid chain; its full sequence is Mu-like prophage FluMu protein gp45 (182 aa).

Residues 159–182 (TDHQSSGISGKNHDHEERVGKPVP) form a disordered region. Residues 169–182 (KNHDHEERVGKPVP) show a composition bias toward basic and acidic residues.

To phage Mu protein gp45.

The chain is Mu-like prophage FluMu protein gp45 from Haemophilus influenzae (strain ATCC 51907 / DSM 11121 / KW20 / Rd).